A 304-amino-acid chain; its full sequence is D-tagatose-1-phosphate kinase (304 aa).

D250 functions as the Proton acceptor in the catalytic mechanism.

Belongs to the carbohydrate kinase PfkB family. Requires Mg(2+) as cofactor.

It catalyses the reaction alpha-D-tagatopyranose 1-phosphate + ATP = D-tagatofuranose 1,6-bisphosphate + ADP + H(+). It participates in carbohydrate degradation. Functionally, kinase involved in a D-tagatose catabolic pathway. Catalyzes the phosphorylation of D-tagatose-1-phosphate (Tag-1P) to D-tagatose-1,6-bisphosphate. This Klebsiella oxytoca protein is D-tagatose-1-phosphate kinase.